The primary structure comprises 349 residues: MDFELEPTLEELIKQDTLKWIFVGGKGGVGKTTTSSSIAVQLALQHPEDEFLLISTDPAHNLSDAFCQKFGKDARKVEGLSNLSCMEIDPEAAMSDLQQQAQQYNNDPNDPLKSMMNDMTGSIPGIDEALSFMEVLKHIKNQKVTESDTKDKVSYRTIIFDTAPTGHTLRFLQLPTTLQKLLGKFQQLSGKLGPMMSMLGGGAQGQQDMFAKLNEVQKNVEEVNEQFTNPDLTTFVCVCISEFLSLYETERMIQELMSYKMDVNSIVVNQLLFADDDENPCKRCVARWKMQKKYLDQMAELYEDYHLVKMPLLGSEIRGVDNLKRFSQFLIKPYDPKVDRAIITDLKEQ.

26-33 (KGGVGKTT) is an ATP binding site. The active site involves Asp57. Glu242 and Asn269 together coordinate ATP. Residues Cys281 and Cys284 each contribute to the Zn(2+) site.

Belongs to the arsA ATPase family. In terms of assembly, homodimer. Component of the Golgi to ER traffic (GET) complex, which is composed of GET1, GET2 and GET3. Within the complex, GET1 and GET2 form a heterotetramer which is stabilized by phosphatidylinositol binding and which binds to the GET3 homodimer. Interacts with the chloride channel protein GEF1.

The protein localises to the cytoplasm. It is found in the endoplasmic reticulum. Its subcellular location is the golgi apparatus. In terms of biological role, ATPase required for the post-translational delivery of tail-anchored (TA) proteins to the endoplasmic reticulum. Recognizes and selectively binds the transmembrane domain of TA proteins in the cytosol. This complex then targets to the endoplasmic reticulum by membrane-bound receptors GET1 and GET2, where the tail-anchored protein is released for insertion. This process is regulated by ATP binding and hydrolysis. ATP binding drives the homodimer towards the closed dimer state, facilitating recognition of newly synthesized TA membrane proteins. ATP hydrolysis is required for insertion. Subsequently, the homodimer reverts towards the open dimer state, lowering its affinity for the GET1-GET2 receptor, and returning it to the cytosol to initiate a new round of targeting. Cooperates with the HDEL receptor ERD2 to mediate the ATP-dependent retrieval of resident ER proteins that contain a C-terminal H-D-E-L retention signal from the Golgi to the ER. Involved in low-level resistance to the oxyanions arsenite and arsenate, and in heat tolerance. The chain is ATPase GET3 from Candida tropicalis (strain ATCC MYA-3404 / T1) (Yeast).